The following is a 569-amino-acid chain: MAQRILTLILLLCSTSAFAGLFDAPGRSQFVPADQAFSFDFQQNQHDLNLSWQVKDGYYLYRKQISITPSQAEIAEVRLPAGVWHEDEFYGKSEIYRKRLNIPLIVNQAASGATLTVTYQGCADAGFCYPPETKTVPLSEVSASTVAKSTPSPVAAQTEETPQPAARLPFSALWALLIGIGIAFTPCVLPMYPLISGIVLGGKQRLSTGRALLLTFIYVQGMALTYTALGLVVAAAGLQFQAALQHPYVLIGLALVFTLLALSMFGLFTLQLPSSLQTRLTLMSNRQQGGSPGGVFVMGAIAGLICSPCTTAPLSAILLYIAQSGNMWLGGGTLYLYALGMGLPLILITVFGNRLLPKSGPWMEHVKTAFGFVILALPVFLLERVIGDEWGLRLWSLLGVAFFGWAFITSLHARRSGMRIVQIILLAAALVSVRPLQDWAFGATTAQTQAHLNFKPITTVDALNQALAEAKGKPIMLDLYADWCVACKEFEKYTFSDPQVQQTLGDTVLLQANVTANNAQDVALLRHLNVLGLPTILFFDAQGHEHPNARVTGFMDATTFSAHLRDRQP.

Residues 1-19 form the signal peptide; sequence MAQRILTLILLLCSTSAFA. 2 cysteine pairs are disulfide-bonded: C122–C128 and C187–C309. 7 consecutive transmembrane segments (helical) span residues 168–188, 213–233, 248–268, 301–321, 328–348, 362–382, and 391–411; these read LPFS…TPCV, LLTF…GLVV, YVLI…FGLF, IAGL…LLYI, WLGG…LILI, WMEH…VFLL, and GLRL…ITSL. The region spanning 430–569 is the Thioredoxin domain; it reads LVSVRPLQDW…FSAHLRDRQP (140 aa). The cysteines at positions 484 and 487 are disulfide-linked.

The protein belongs to the thioredoxin family. DsbD subfamily.

The protein resides in the cell inner membrane. The enzyme catalyses [protein]-dithiol + NAD(+) = [protein]-disulfide + NADH + H(+). It catalyses the reaction [protein]-dithiol + NADP(+) = [protein]-disulfide + NADPH + H(+). Functionally, required to facilitate the formation of correct disulfide bonds in some periplasmic proteins and for the assembly of the periplasmic c-type cytochromes. Acts by transferring electrons from cytoplasmic thioredoxin to the periplasm. This transfer involves a cascade of disulfide bond formation and reduction steps. The chain is Thiol:disulfide interchange protein DsbD from Citrobacter koseri (strain ATCC BAA-895 / CDC 4225-83 / SGSC4696).